We begin with the raw amino-acid sequence, 146 residues long: Large ribosomal subunit protein uL15 (146 aa).

Residues methionine 1 to arginine 13 show a composition bias toward basic and acidic residues. Residues methionine 1–leucine 48 form a disordered region. Residues arginine 21–alanine 31 are compositionally biased toward gly residues.

Belongs to the universal ribosomal protein uL15 family. As to quaternary structure, part of the 50S ribosomal subunit.

In terms of biological role, binds to the 23S rRNA. The polypeptide is Large ribosomal subunit protein uL15 (Bacillus cytotoxicus (strain DSM 22905 / CIP 110041 / 391-98 / NVH 391-98)).